A 395-amino-acid chain; its full sequence is Non-structural protein 1 (395 aa).

The DRBM domain occupies 328 to 395; sequence NYIQLLNEHS…AEQMFRHQCF (68 aa).

This is Non-structural protein 1 from Homo sapiens (Human).